The chain runs to 343 residues: 4-hydroxy-2-oxovalerate aldolase 1 (343 aa).

Residues 8–260 (ITVHDMSLRD…ETGVDVFAIS (253 aa)) form the Pyruvate carboxyltransferase domain. Residue 16-17 (RD) coordinates substrate. Aspartate 17 provides a ligand contact to Mn(2+). The active-site Proton acceptor is histidine 20. Substrate is bound by residues serine 170 and histidine 199. Positions 199 and 201 each coordinate Mn(2+). Position 290 (tyrosine 290) interacts with substrate.

This sequence belongs to the 4-hydroxy-2-oxovalerate aldolase family.

The catalysed reaction is (S)-4-hydroxy-2-oxopentanoate = acetaldehyde + pyruvate. The sequence is that of 4-hydroxy-2-oxovalerate aldolase 1 (bphI) from Burkholderia cenocepacia (strain ATCC BAA-245 / DSM 16553 / LMG 16656 / NCTC 13227 / J2315 / CF5610) (Burkholderia cepacia (strain J2315)).